A 93-amino-acid chain; its full sequence is MASGQQERSQLDRKAREGETVVPGGTGGKSLEAHENLAEGRSRGGQTRREQMGEEGYSEMGRKGGLSTNDESGGERAAREGIDIDESKFKTKS.

Residues 1–93 (MASGQQERSQ…IDESKFKTKS (93 aa)) are disordered. Composition is skewed to basic and acidic residues over residues 9-19 (SQLDRKAREGE), 31-52 (LEAHENLAEGRSRGGQTRREQM), and 73-93 (GGERAAREGIDIDESKFKTKS).

It belongs to the small hydrophilic plant seed protein family.

In terms of biological role, it is thought to provide protection for the cytoplasm during the desiccation stage of embryo development. The polypeptide is Em protein H2 (EMH2) (Triticum aestivum (Wheat)).